A 364-amino-acid polypeptide reads, in one-letter code: Oxidized polyvinyl alcohol hydrolase (364 aa).

Residues 1–34 (MFKPVVKSRSSRSFCYLAGCLAMVAATLSSTAQA) form the signal peptide. Catalysis depends on charge relay system residues Ser-190 and Ser-293.

The protein belongs to the peptidase S9A family. As to quaternary structure, monomer.

Its subcellular location is the periplasm. The catalysed reaction is nonane-4,6-dione + H2O = pentan-2-one + butanoate + H(+). In terms of biological role, catalyzes the hydrolysis of 4,6-nonanedione, a beta-diketone compound. Also mediates hydrolysis of oxidized polyvinyl alcohol (PVA) in the second step in the degradation of polyvinyl alcohol. Not active toward the monoketone structure. This Sphingopyxis sp. (strain 113P3) protein is Oxidized polyvinyl alcohol hydrolase (oph).